Reading from the N-terminus, the 644-residue chain is Neurofilament medium polypeptide (644 aa).

Positions 1–33 are coil 1B; sequence VKVELDKKVQSLQDEVAFLRTNHEEEVADLLAQ. The IF rod domain occupies 1–197; the sequence is VKVELDKKVQ…KLLEGEETRF (197 aa). Phosphoserine is present on serine 11. Residues 34-50 form a linker 12 region; that stretch reads IQASHITVERKDYLKTD. The tract at residues 51–72 is coil 2A; it reads ISSALKEIRSQLECHSDQNMHQ. The segment at 73-76 is linker 2; it reads AEEW. The interval 77–197 is coil 2B; that stretch reads FKCRYAKLTE…KLLEGEETRF (121 aa). At tyrosine 105 the chain carries Phosphotyrosine. Residues serine 131, serine 203, and serine 215 each carry the phosphoserine modification. Residues 198-643 form a tail region; that stretch reads STFSGSITGP…HAIVKEVTQS (446 aa). O-linked (GlcNAc) threonine glycosylation occurs at threonine 217. Phosphoserine is present on residues serine 253 and serine 269. The disordered stretch occupies residues 270 to 582; the sequence is VKEEEKEEEA…GGDRSEEKVV (313 aa). Residues 274 to 292 are compositionally biased toward acidic residues; that stretch reads EKEEEAEGKEEEQEAEEEV. Serine 298 is subject to Phosphoserine. Residues 308-328 are compositionally biased toward acidic residues; the sequence is KEEEGEKEEEGQEEEEEEEDE. A compositionally biased stretch (basic and acidic residues) spans 329–350; sequence GVKSDQAEEGGSEKEGSSKNEG. Serine 332, serine 340, serine 345, and serine 346 each carry phosphoserine. The span at 351–368 shows a compositional bias: acidic residues; the sequence is EQEEGETEAEGEVEEAEA. Threonine 357 is subject to Phosphothreonine. The span at 369–400 shows a compositional bias: basic and acidic residues; it reads KEEKKTEEKSEEVAAKEEPVTEAKVGKPEKAK. 4 positions are modified to phosphoserine: serine 401, serine 406, serine 442, and serine 465. Basic and acidic residues predominate over residues 422–470; that stretch reads GEQKEEEEKVEEEKKKAAKESPKEEKVEKKEEKPKDVPKKKAESPVKEE. The span at 474–483 shows a compositional bias: low complexity; it reads EAATITKPTK. The span at 485 to 508 shows a compositional bias: basic and acidic residues; it reads GLEKETKEGEKPLQQEKEKEKAGE. Phosphoserine occurs at positions 512, 550, and 566. Residues 545–557 show a composition bias toward basic and acidic residues; sequence TKEKGSGREEEKG. A compositionally biased stretch (basic and acidic residues) spans 568-582; the sequence is ADEKKGGDRSEEKVV.

This sequence belongs to the intermediate filament family. As to quaternary structure, forms heterodimers with NEFL; which can further hetero-oligomerize (in vitro). Forms heterodimers with INA (in vitro). In terms of processing, there are a number of repeats of the tripeptide K-S-P, NFM is phosphorylated on a number of the serines in this motif. It is thought that phosphorylation of NFM results in the formation of interfilament cross bridges that are important in the maintenance of axonal caliber. Post-translationally, phosphorylation seems to play a major role in the functioning of the larger neurofilament polypeptides (NF-M and NF-H), the levels of phosphorylation being altered developmentally and coincidentally with a change in the neurofilament function. Phosphorylated in the head and rod regions by the PKC kinase PKN1, leading to the inhibition of polymerization.

The protein localises to the cytoplasm. Its subcellular location is the cytoskeleton. It is found in the cell projection. The protein resides in the axon. In terms of biological role, neurofilaments usually contain three intermediate filament proteins: NEFL, NEFM, and NEFH which are involved in the maintenance of neuronal caliber. May additionally cooperate with the neuronal intermediate filament proteins PRPH and INA to form neuronal filamentous networks. In Oryctolagus cuniculus (Rabbit), this protein is Neurofilament medium polypeptide (NEFM).